We begin with the raw amino-acid sequence, 155 residues long: Small ribosomal subunit protein uS7 (155 aa).

It belongs to the universal ribosomal protein uS7 family. As to quaternary structure, part of the 30S ribosomal subunit. Contacts proteins S9 and S11.

In terms of biological role, one of the primary rRNA binding proteins, it binds directly to 16S rRNA where it nucleates assembly of the head domain of the 30S subunit. Is located at the subunit interface close to the decoding center, probably blocks exit of the E-site tRNA. This chain is Small ribosomal subunit protein uS7, found in Corynebacterium diphtheriae (strain ATCC 700971 / NCTC 13129 / Biotype gravis).